A 348-amino-acid chain; its full sequence is Histidinol-phosphate aminotransferase (348 aa).

The residue at position 207 (lysine 207) is an N6-(pyridoxal phosphate)lysine.

Belongs to the class-II pyridoxal-phosphate-dependent aminotransferase family. Histidinol-phosphate aminotransferase subfamily. In terms of assembly, homodimer. It depends on pyridoxal 5'-phosphate as a cofactor.

It carries out the reaction L-histidinol phosphate + 2-oxoglutarate = 3-(imidazol-4-yl)-2-oxopropyl phosphate + L-glutamate. Its pathway is amino-acid biosynthesis; L-histidine biosynthesis; L-histidine from 5-phospho-alpha-D-ribose 1-diphosphate: step 7/9. This Rippkaea orientalis (strain PCC 8801 / RF-1) (Cyanothece sp. (strain PCC 8801)) protein is Histidinol-phosphate aminotransferase.